A 416-amino-acid polypeptide reads, in one-letter code: Serine/threonine transporter SstT (416 aa).

The next 9 membrane-spanning stretches (helical) occupy residues 15 to 35, 49 to 69, 82 to 102, 141 to 161, 192 to 212, 217 to 237, 288 to 308, 330 to 350, and 356 to 376; these read SLVS…MFMP, VGAL…AAII, ILLL…VASF, ALMD…GIAM, LGIL…ALFG, LVVL…IIVF, VSIP…ITVL, VVAT…LLLI, and LFGI…IIGV.

This sequence belongs to the dicarboxylate/amino acid:cation symporter (DAACS) (TC 2.A.23) family.

Its subcellular location is the cell inner membrane. The catalysed reaction is L-serine(in) + Na(+)(in) = L-serine(out) + Na(+)(out). It carries out the reaction L-threonine(in) + Na(+)(in) = L-threonine(out) + Na(+)(out). Its function is as follows. Involved in the import of serine and threonine into the cell, with the concomitant import of sodium (symport system). The polypeptide is Serine/threonine transporter SstT (Aeromonas salmonicida (strain A449)).